The following is a 1360-amino-acid chain: DNA-directed RNA polymerase subunit beta (1360 aa).

This sequence belongs to the RNA polymerase beta chain family. As to quaternary structure, the RNAP catalytic core consists of 2 alpha, 1 beta, 1 beta' and 1 omega subunit. When a sigma factor is associated with the core the holoenzyme is formed, which can initiate transcription.

It carries out the reaction RNA(n) + a ribonucleoside 5'-triphosphate = RNA(n+1) + diphosphate. In terms of biological role, DNA-dependent RNA polymerase catalyzes the transcription of DNA into RNA using the four ribonucleoside triphosphates as substrates. In Magnetococcus marinus (strain ATCC BAA-1437 / JCM 17883 / MC-1), this protein is DNA-directed RNA polymerase subunit beta.